We begin with the raw amino-acid sequence, 898 residues long: MLRTIVTKIFGSRNDRILRRLNKQVRIINKLEAEFELLTDEELKSKTTEFRTRLKNGEKLENLIPEAFATVREASKRILGMRPFDVQLIGGMVLNNRCIAEMRTGEGKTLTATLPCYLNALTGKGVHVVTVNDYLARRDAETNRPLFEFLGMTVGINVPGLSPEEKRAAYAADITYATNSELGFDYLRDNLAHSAQDRFQKHLHYALVDEVDSILIDEARTPLIISGPAEDSSELYMAMDKLIPILIQQDKEDTEEYQGDGDFTLDLKNKQAHLTERGQEKIEQWLMEKGFINENESLYSPARISLLHHIYAALRAHKLFERDVDYIVKNGEIVIVDEHTGRTMAGRRWSDGLHQAIEAKEGVQIQGENQTVASITYQNYFRLYEKLAGMTGTADTEAFEFQQIYGLETIVIPTNKPMIRDDRTDIMFENEKYKFDAIIEDIKDCVARNQPVLVGTISIEKSELLSNALNKAGIKHNVLNAKFHAQEAEIIANAGYPSAVTIATNMAGRGTDIVLGGNWKAEVAKLDDPTEEQIEEIKAAWQIRHDTVKQAGGLHIIGTERHESRRIDNQLRGRSGRQGDPGSSRFYLSLDDALMRIYLTEGKLNFMRKMFTEKGEGMESKMLAKVIAQAQAKVEAHNFDGRKNLLEFDDVANDQRHAIYEQRNALLDNEDIADTIQVIRQDVFNHVIDEYVPPHSLEEQWDIPALETRLKQDFALDLPLSKWLEEDNTFNEDVLRERVLTVAISEYKRKEELVGQETMRNFEKGVMLQTLDELWKEHLSAMDHLRRGIHLRGYAQKDPKQEYKKESFQMFTDMLDTLKLSVITTLSRVQIRTQDEVEKAEQARQKIAERENAAMQYQNNEGTSSLHEKSEHKIGRNESCPCGSGKKYKHCHGSKAKY.

ATP-binding positions include Gln-87, 105 to 109 (GEGKT), and Asp-512. Residues 855–865 (MQYQNNEGTSS) show a composition bias toward polar residues. The disordered stretch occupies residues 855-898 (MQYQNNEGTSSLHEKSEHKIGRNESCPCGSGKKYKHCHGSKAKY). The segment covering 866-876 (LHEKSEHKIGR) has biased composition (basic and acidic residues). The Zn(2+) site is built by Cys-880, Cys-882, Cys-891, and His-892. Residues 886-898 (KKYKHCHGSKAKY) are compositionally biased toward basic residues.

It belongs to the SecA family. As to quaternary structure, monomer and homodimer. Part of the essential Sec protein translocation apparatus which comprises SecA, SecYEG and auxiliary proteins SecDF-YajC and YidC. The cofactor is Zn(2+).

The protein resides in the cell inner membrane. The protein localises to the cytoplasm. The enzyme catalyses ATP + H2O + cellular proteinSide 1 = ADP + phosphate + cellular proteinSide 2.. Its function is as follows. Part of the Sec protein translocase complex. Interacts with the SecYEG preprotein conducting channel. Has a central role in coupling the hydrolysis of ATP to the transfer of proteins into and across the cell membrane, serving both as a receptor for the preprotein-SecB complex and as an ATP-driven molecular motor driving the stepwise translocation of polypeptide chains across the membrane. This chain is Protein translocase subunit SecA, found in Histophilus somni (strain 129Pt) (Haemophilus somnus).